The sequence spans 39 residues: U1-nemetoxin-Csp1c (39 aa).

4 disulfides stabilise this stretch: Cys-1–Cys-15, Cys-8–Cys-19, Cys-14–Cys-36, and Cys-25–Cys-32.

In terms of tissue distribution, expressed by the venom gland.

The protein resides in the secreted. Its function is as follows. Causes paralysis to insect larvae (H.virescens). This toxin is active only on insects. This Calisoga sp. (Spider) protein is U1-nemetoxin-Csp1c.